The following is a 515-amino-acid chain: Maturase K (515 aa).

The protein belongs to the intron maturase 2 family. MatK subfamily.

It is found in the plastid. The protein resides in the chloroplast. Its function is as follows. Usually encoded in the trnK tRNA gene intron. Probably assists in splicing its own and other chloroplast group II introns. The protein is Maturase K of Zingiber mioga (Myoga ginger).